A 235-amino-acid chain; its full sequence is tRNA (guanine-N(1)-)-methyltransferase (235 aa).

Residues Gly114 and 134–139 (IGDYIL) each bind S-adenosyl-L-methionine.

Belongs to the RNA methyltransferase TrmD family. As to quaternary structure, homodimer.

It is found in the cytoplasm. The catalysed reaction is guanosine(37) in tRNA + S-adenosyl-L-methionine = N(1)-methylguanosine(37) in tRNA + S-adenosyl-L-homocysteine + H(+). Specifically methylates guanosine-37 in various tRNAs. This is tRNA (guanine-N(1)-)-methyltransferase from Ehrlichia canis (strain Jake).